The primary structure comprises 401 residues: Argininosuccinate synthase (401 aa).

ATP is bound at residue 9–17 (AYSGGLDTS). Position 86 (Y86) interacts with L-citrulline. G116 serves as a coordination point for ATP. Residues T118, N122, and D123 each contribute to the L-aspartate site. N122 contacts L-citrulline. 5 residues coordinate L-citrulline: R126, S174, S183, E259, and Y271.

This sequence belongs to the argininosuccinate synthase family. Type 1 subfamily. As to quaternary structure, homotetramer.

The protein localises to the cytoplasm. The enzyme catalyses L-citrulline + L-aspartate + ATP = 2-(N(omega)-L-arginino)succinate + AMP + diphosphate + H(+). Its pathway is amino-acid biosynthesis; L-arginine biosynthesis; L-arginine from L-ornithine and carbamoyl phosphate: step 2/3. This chain is Argininosuccinate synthase, found in Bacillus cereus (strain AH187).